Reading from the N-terminus, the 461-residue chain is Lysosomal proton-coupled steroid conjugate and bile acid symporter SLC46A3 (461 aa).

The first 25 residues, 1–25 (MKIPFVEPVICLSVFAVTLNSPLTT), serve as a signal peptide directing secretion. The Extracellular portion of the chain corresponds to 26-70 (QYVYRRIWEETGNYSIALESNTSECAKNKSSPIFAFQEEVQKKVS). N-linked (GlcNAc...) asparagine glycans are attached at residues Asn38, Asn46, and Asn53. The chain crosses the membrane as a helical span at residues 71 to 91 (LFNLEMDISGLIPGLVSTFVF). The Cytoplasmic portion of the chain corresponds to 92–101 (LSHSDHGGRK). A helical transmembrane segment spans residues 102 to 124 (FPLILSSVGALANSAWLCLLSYF). The Extracellular segment spans residues 125–133 (ALPIQLLIA). A helical transmembrane segment spans residues 134–156 (STFIGALFGNYTTFLGASFAYIV). Residues 157–170 (DQCKEKKQRTIRIA) are Cytoplasmic-facing. Residues 171-191 (IIDFLFGVVSGLTGLSSGYFI) form a helical membrane-spanning segment. At 192–195 (RGLG) the chain is on the extracellular side. A helical transmembrane segment spans residues 196–216 (FVWSFLIVTVALFVNLIYILL). Residues 217–261 (FLEDSMKESSSQNISVSWTETFKNLFHRTYMLFKNASGEQQSLCC) lie on the Cytoplasmic side of the membrane. Residues 262-282 (LLLFTMITYFFVTIGVSPIFV) form a helical membrane-spanning segment. The Extracellular portion of the chain corresponds to 283 to 294 (LYELDSPLCWDE). A helical membrane pass occupies residues 295-315 (VLIGYGSALGSVTFFSSFLGI). The Cytoplasmic segment spans residues 316–324 (WLFSYCMED). The helical transmembrane segment at 325–345 (IHMAFIGTFTTMVGMAMTAFA) threads the bilayer. Residues 346 to 347 (RT) lie on the Extracellular side of the membrane. Residues 348–368 (TLMMFLVRLPFLFTVMPLSVL) form a helical membrane-spanning segment. Residues 369–382 (RSMISKVVHSTEQG) lie on the Cytoplasmic side of the membrane. Residues 383–403 (TMFACLAFLETLGGITAVSTF) traverse the membrane as a helical segment. The Extracellular portion of the chain corresponds to 404 to 415 (NGIYSATVAWCK). The chain crosses the membrane as a helical span at residues 416–436 (GFVFLLSAVLLLIPAISLCVI). Residues 437–461 (KYVSRNTGSYVLLIQEESSEDTSDR) lie on the Cytoplasmic side of the membrane. The short motif at 446 to 449 (YVLL) is the Tyrosine-based lysosomal-sorting motif element.

It belongs to the major facilitator superfamily. SLC46A family.

The protein resides in the lysosome membrane. It catalyses the reaction estrone 3-sulfate(out) + n H(+)(out) = estrone 3-sulfate(in) + n H(+)(in). It carries out the reaction 25-hydroxyvitamin D3 sulfate(out) + n H(+)(out) = 25-hydroxyvitamin D3 sulfate(in) + n H(+)(in). The catalysed reaction is cholate(out) + n H(+)(out) = cholate(in) + n H(+)(in). The enzyme catalyses glycocholate(out) + n H(+)(out) = glycocholate(in) + n H(+)(in). It catalyses the reaction taurocholate(out) + n H(+)(out) = taurocholate(in) + n H(+)(in). It carries out the reaction dehydroepiandrosterone 3-sulfate(out) + n H(+)(out) = dehydroepiandrosterone 3-sulfate(in) + n H(+)(in). The catalysed reaction is N-acetyl-D-muramoyl-L-alanyl-D-isoglutamine(out) + n H(+)(out) = N-acetyl-D-muramoyl-L-alanyl-D-isoglutamine(in) + n H(+)(in). The enzyme catalyses 2',3'-cGAMP(out) + n H(+)(out) = 2',3'-cGAMP(in) + n H(+)(in). Lysosomal proton-coupled steroid conjugate and bile acid transporter. Preferentially recognizes lipophilic steroid conjugates or bile acis as endogenous substrates and seems to mediate escape from lysosomes to the cytoplasm. Modulates hepatic cytosolic copper homeostasis, maybe acting as a lysosomal copper transporter and sequestering copper ions in the lysosome. Delivers pathogen-associated molecular patterns to cytosolic pattern recognition receptors as part of the innate immune response to microbes. Selectively transports bacterial muramyl dipeptide (MDP) into the cytosol for recognition by NOD2, triggering inflammatory responses. Likely acts as a redundant importer of cyclic GMP-AMP dinucleotides (cGAMPs) in monocyte and macrophage cell lineages. The transport mechanism, its electrogenicity and stoichiometry remain to be elucidated. This chain is Lysosomal proton-coupled steroid conjugate and bile acid symporter SLC46A3 (SLC46A3), found in Bos taurus (Bovine).